The sequence spans 167 residues: Peptide deformylase (167 aa).

2 residues coordinate Fe cation: Cys-90 and His-132. Glu-133 is a catalytic residue. His-136 is a Fe cation binding site.

The protein belongs to the polypeptide deformylase family. It depends on Fe(2+) as a cofactor.

The catalysed reaction is N-terminal N-formyl-L-methionyl-[peptide] + H2O = N-terminal L-methionyl-[peptide] + formate. In terms of biological role, removes the formyl group from the N-terminal Met of newly synthesized proteins. Requires at least a dipeptide for an efficient rate of reaction. N-terminal L-methionine is a prerequisite for activity but the enzyme has broad specificity at other positions. This is Peptide deformylase from Dehalococcoides mccartyi (strain CBDB1).